The following is a 263-amino-acid chain: Acyl-[acyl-carrier-protein]--UDP-N-acetylglucosamine O-acyltransferase (263 aa).

It belongs to the transferase hexapeptide repeat family. LpxA subfamily. In terms of assembly, homotrimer.

It localises to the cytoplasm. The catalysed reaction is a (3R)-hydroxyacyl-[ACP] + UDP-N-acetyl-alpha-D-glucosamine = a UDP-3-O-[(3R)-3-hydroxyacyl]-N-acetyl-alpha-D-glucosamine + holo-[ACP]. Its pathway is glycolipid biosynthesis; lipid IV(A) biosynthesis; lipid IV(A) from (3R)-3-hydroxytetradecanoyl-[acyl-carrier-protein] and UDP-N-acetyl-alpha-D-glucosamine: step 1/6. Its function is as follows. Involved in the biosynthesis of lipid A, a phosphorylated glycolipid that anchors the lipopolysaccharide to the outer membrane of the cell. The protein is Acyl-[acyl-carrier-protein]--UDP-N-acetylglucosamine O-acyltransferase of Xylella fastidiosa (strain Temecula1 / ATCC 700964).